Reading from the N-terminus, the 288-residue chain is 2-hydroxy-6-oxononadienedioate/2-hydroxy-6-oxononatrienedioate hydrolase (288 aa).

The active-site Proton acceptor is His-267.

This sequence belongs to the AB hydrolase superfamily. MhpC family. In terms of assembly, homodimer.

The enzyme catalyses (2Z,4E)-2-hydroxy-6-oxonona-2,4-dienedioate + H2O = (2Z)-2-hydroxypenta-2,4-dienoate + succinate + H(+). It catalyses the reaction (2Z,4E,7E)-2-hydroxy-6-oxonona-2,4,7-trienedioate + H2O = (2Z)-2-hydroxypenta-2,4-dienoate + fumarate + H(+). It participates in aromatic compound metabolism; 3-phenylpropanoate degradation. Functionally, catalyzes the cleavage of the C5-C6 bond of 2-hydroxy-6-oxononadienedioate and 2-hydroxy-6-oxononatrienedioate, a dienol ring fission product of the bacterial meta-cleavage pathway for degradation of phenylpropionic acid. The chain is 2-hydroxy-6-oxononadienedioate/2-hydroxy-6-oxononatrienedioate hydrolase from Klebsiella pneumoniae subsp. pneumoniae (strain ATCC 700721 / MGH 78578).